The following is a 765-amino-acid chain: Probable dehydratase PflD (765 aa).

Residues 3–637 (NRISRLKTAL…VVGATPDGRF (635 aa)) form the PFL domain. The 121-residue stretch at 645 to 765 (GGLSPMLGQD…DIIRRTAHQL (121 aa)) folds into the Glycine radical domain. The residue at position 741 (glycine 741) is a Glycine radical.

Belongs to the glycyl radical enzyme (GRE) family.

Probably shows dehydratase activity. In Escherichia coli (strain K12), this protein is Probable dehydratase PflD (pflD).